The following is a 743-amino-acid chain: Phenylalanine ammonia-lyase 1 (743 aa).

Tyr-120 serves as the catalytic Proton donor/acceptor. Positions Ala-224–Gly-226 form a cross-link, 5-imidazolinone (Ala-Gly). At Ser-225 the chain carries 2,3-didehydroalanine (Ser). (E)-cinnamate is bound by residues Asn-287, Gln-377, Arg-383, Asn-413, Lys-484, Glu-512, and Asn-515.

It belongs to the PAL/histidase family. Homotetramer. Contains an active site 4-methylidene-imidazol-5-one (MIO), which is formed autocatalytically by cyclization and dehydration of residues Ala-Ser-Gly.

The protein resides in the cytoplasm. The enzyme catalyses L-phenylalanine = (E)-cinnamate + NH4(+). Its pathway is phenylpropanoid metabolism; trans-cinnamate biosynthesis; trans-cinnamate from L-phenylalanine: step 1/1. In terms of biological role, catalyzes the non-oxidative deamination of L-phenylalanine to form trans-cinnamic acid and a free ammonium ion. Facilitates the commitment step in phenylpropanoid pathways that produce secondary metabolites such as lignins, coumarins and flavonoids. The sequence is that of Phenylalanine ammonia-lyase 1 from Pleurotus ostreatus (Oyster mushroom).